The sequence spans 123 residues: Large ribosomal subunit protein uL14 (123 aa).

This sequence belongs to the universal ribosomal protein uL14 family. In terms of assembly, part of the 50S ribosomal subunit. Forms a cluster with proteins L3 and L19. In the 70S ribosome, L14 and L19 interact and together make contacts with the 16S rRNA in bridges B5 and B8.

In terms of biological role, binds to 23S rRNA. Forms part of two intersubunit bridges in the 70S ribosome. This Blochmanniella floridana protein is Large ribosomal subunit protein uL14.